Consider the following 159-residue polypeptide: Ribosome maturation factor RimM (159 aa).

The 74-residue stretch at 86–159 (SDAFHLPKLI…IHIETIEGLI (74 aa)) folds into the PRC barrel domain.

It belongs to the RimM family. In terms of assembly, binds ribosomal protein uS19.

The protein resides in the cytoplasm. In terms of biological role, an accessory protein needed during the final step in the assembly of 30S ribosomal subunit, possibly for assembly of the head region. Essential for efficient processing of 16S rRNA. May be needed both before and after RbfA during the maturation of 16S rRNA. It has affinity for free ribosomal 30S subunits but not for 70S ribosomes. The polypeptide is Ribosome maturation factor RimM (Acholeplasma laidlawii (strain PG-8A)).